A 153-amino-acid chain; its full sequence is Salivary C-type lectin 1 (153 aa).

An N-terminal signal peptide occupies residues 1–19; it reads MIFSLYLIVAISLADLTAA. The C-type lectin domain occupies 26–151; the sequence is KNRFCFPNVV…CSSTRRFVCE (126 aa). 2 disulfide bridges follow: Cys45-Cys150 and Cys122-Cys142.

The cofactor is Ca(2+). Expressed in female salivary gland. Not detected or low-level expression in female midgut and fat body.

The protein resides in the secreted. Functionally, salivary protein with carbohydrate-binding activity; exibits high affinity for D-mannose. Agglutinates host erythrocytes. Probably participates in mosquito innate immune responses to prevent microorganism multiplication in sugar and blood meals. In terms of biological role, (Microbial infection) Agglutinates Staphylococcus aureus in vitro. Its function is as follows. (Microbial infection) Agglutinates Candida albicans in vitro. (Microbial infection) Does not agglutinate Escherichia coli in vitro. This chain is Salivary C-type lectin 1, found in Aedes albopictus (Asian tiger mosquito).